Reading from the N-terminus, the 105-residue chain is Large ribosomal subunit protein eL36 (105 aa).

It belongs to the eukaryotic ribosomal protein eL36 family. Component of the large ribosomal subunit.

It is found in the cytoplasm. The protein localises to the cytosol. Its function is as follows. Component of the large ribosomal subunit. The ribosome is a large ribonucleoprotein complex responsible for the synthesis of proteins in the cell. The sequence is that of Large ribosomal subunit protein eL36 (RPL36) from Hydrophis hardwickii (Hardwick's spine-bellied seasnake).